Consider the following 279-residue polypeptide: Thymidylate synthase (279 aa).

A dUMP-binding site is contributed by 133–134; the sequence is RR. Cysteine 154 (nucleophile) is an active-site residue. Residues 178–181, asparagine 189, and 219–221 each bind dUMP; these read RSND and HIY. Position 181 (aspartate 181) interacts with (6R)-5,10-methylene-5,6,7,8-tetrahydrofolate. Alanine 278 serves as a coordination point for (6R)-5,10-methylene-5,6,7,8-tetrahydrofolate.

Belongs to the thymidylate synthase family. Bacterial-type ThyA subfamily. As to quaternary structure, homodimer.

Its subcellular location is the cytoplasm. It catalyses the reaction dUMP + (6R)-5,10-methylene-5,6,7,8-tetrahydrofolate = 7,8-dihydrofolate + dTMP. It participates in pyrimidine metabolism; dTTP biosynthesis. In terms of biological role, catalyzes the reductive methylation of 2'-deoxyuridine-5'-monophosphate (dUMP) to 2'-deoxythymidine-5'-monophosphate (dTMP) while utilizing 5,10-methylenetetrahydrofolate (mTHF) as the methyl donor and reductant in the reaction, yielding dihydrofolate (DHF) as a by-product. This enzymatic reaction provides an intracellular de novo source of dTMP, an essential precursor for DNA biosynthesis. The polypeptide is Thymidylate synthase (Streptococcus pyogenes serotype M6 (strain ATCC BAA-946 / MGAS10394)).